The following is a 164-amino-acid chain: CB1 cannabinoid receptor-interacting protein 1 (164 aa).

Belongs to the CNRIP family. Interacts with the cannabinoid receptor CNR1 (via C-terminus). Does not interact with cannabinoid receptor CNR2.

Functionally, suppresses cannabinoid receptor CNR1-mediated tonic inhibition of voltage-gated calcium channels. The sequence is that of CB1 cannabinoid receptor-interacting protein 1 (Cnrip1) from Rattus norvegicus (Rat).